Reading from the N-terminus, the 369-residue chain is DNA replication and repair protein RecF (369 aa).

An ATP-binding site is contributed by 30-37; it reads GDNAQGKT.

This sequence belongs to the RecF family.

Its subcellular location is the cytoplasm. Functionally, the RecF protein is involved in DNA metabolism; it is required for DNA replication and normal SOS inducibility. RecF binds preferentially to single-stranded, linear DNA. It also seems to bind ATP. The chain is DNA replication and repair protein RecF from Streptococcus equi subsp. zooepidemicus (strain MGCS10565).